Consider the following 171-residue polypeptide: Small ribosomal subunit protein uS4 (171 aa).

Positions 104–168 (RRLQTIVYKK…SPFKERAEEA (65 aa)) constitute an S4 RNA-binding domain.

Belongs to the universal ribosomal protein uS4 family. Part of the 30S ribosomal subunit. Contacts protein S5. The interaction surface between S4 and S5 is involved in control of translational fidelity.

Functionally, one of the primary rRNA binding proteins, it binds directly to 16S rRNA where it nucleates assembly of the body of the 30S subunit. With S5 and S12 plays an important role in translational accuracy. The polypeptide is Small ribosomal subunit protein uS4 (Aeropyrum pernix (strain ATCC 700893 / DSM 11879 / JCM 9820 / NBRC 100138 / K1)).